The primary structure comprises 165 residues: uncharacterized protein (165 aa).

The signal sequence occupies residues 1-17; sequence MIRGFFLILLFLLLAFF.

This is an uncharacterized protein from Aquifex aeolicus (strain VF5).